Here is a 229-residue protein sequence, read N- to C-terminus: Uracil-DNA glycosylase (229 aa).

Catalysis depends on aspartate 64, which acts as the Proton acceptor.

Belongs to the uracil-DNA glycosylase (UDG) superfamily. UNG family.

It is found in the cytoplasm. It catalyses the reaction Hydrolyzes single-stranded DNA or mismatched double-stranded DNA and polynucleotides, releasing free uracil.. Its function is as follows. Excises uracil residues from the DNA which can arise as a result of misincorporation of dUMP residues by DNA polymerase or due to deamination of cytosine. The sequence is that of Uracil-DNA glycosylase from Escherichia coli O7:K1 (strain IAI39 / ExPEC).